The following is a 292-amino-acid chain: Elongation factor Ts (292 aa).

The involved in Mg(2+) ion dislocation from EF-Tu stretch occupies residues 79–82; that stretch reads TDFV.

Belongs to the EF-Ts family.

It is found in the cytoplasm. Associates with the EF-Tu.GDP complex and induces the exchange of GDP to GTP. It remains bound to the aminoacyl-tRNA.EF-Tu.GTP complex up to the GTP hydrolysis stage on the ribosome. This Mycoplasmoides gallisepticum (strain R(low / passage 15 / clone 2)) (Mycoplasma gallisepticum) protein is Elongation factor Ts.